The primary structure comprises 134 residues: Interleukin-5 (134 aa).

An N-terminal signal peptide occupies residues 1–21 (MRMHLHLTLVALGAAYVCANA). Residues N76 and N90 are each glycosylated (N-linked (GlcNAc...) asparagine).

Belongs to the IL-5 family. In terms of assembly, homodimer; disulfide-linked. Interacts with IL5RA. Interacts with CSF2RB.

The protein resides in the secreted. In terms of biological role, homodimeric cytokine expressed predominantly by T-lymphocytes and NK cells that plays an important role in the survival, differentiation, and chemotaxis of eosinophils. Also acts on activated and resting B-cells to induce immunoglobulin production, growth, and differentiation. Mechanistically, exerts its biological effects through a receptor composed of IL5RA subunit and the cytokine receptor common subunit beta/CSF2RB. Binding to the receptor leads to activation of various kinases including LYN, SYK and JAK2 and thereby propagates signals through the RAS-MAPK and JAK-STAT5 pathways respectively. This Bos taurus (Bovine) protein is Interleukin-5 (IL5).